Here is a 282-residue protein sequence, read N- to C-terminus: 4-hydroxy-tetrahydrodipicolinate reductase (282 aa).

12 to 17 (GVTGRM) is an NAD(+) binding site. NADP(+) is bound at residue arginine 44. NAD(+)-binding positions include 107–109 (GTT) and 131–134 (SSNF). The active-site Proton donor/acceptor is the histidine 164. Residue histidine 165 participates in (S)-2,3,4,5-tetrahydrodipicolinate binding. Lysine 168 functions as the Proton donor in the catalytic mechanism. 174–175 (GT) is a (S)-2,3,4,5-tetrahydrodipicolinate binding site.

The protein belongs to the DapB family. As to quaternary structure, homotetramer.

It localises to the cytoplasm. The catalysed reaction is (S)-2,3,4,5-tetrahydrodipicolinate + NAD(+) + H2O = (2S,4S)-4-hydroxy-2,3,4,5-tetrahydrodipicolinate + NADH + H(+). The enzyme catalyses (S)-2,3,4,5-tetrahydrodipicolinate + NADP(+) + H2O = (2S,4S)-4-hydroxy-2,3,4,5-tetrahydrodipicolinate + NADPH + H(+). It participates in amino-acid biosynthesis; L-lysine biosynthesis via DAP pathway; (S)-tetrahydrodipicolinate from L-aspartate: step 4/4. Functionally, catalyzes the conversion of 4-hydroxy-tetrahydrodipicolinate (HTPA) to tetrahydrodipicolinate. In Blochmanniella pennsylvanica (strain BPEN), this protein is 4-hydroxy-tetrahydrodipicolinate reductase.